The chain runs to 131 residues: MSAATDEILEKLKTLTLLEAAELVKQIEEAFGVSAAAPAGGMVMMAPGAGAAAPAEEVEEKTAFDVVLDDVPADKKIAVLKIVRELTGLGLKEAKEVVESTPKPIKEGISKEDAEAAKKQLEDAGGKVSIK.

The segment covering serine 100 to glycine 125 has biased composition (basic and acidic residues). Residues serine 100–lysine 131 form a disordered region.

The protein belongs to the bacterial ribosomal protein bL12 family. In terms of assembly, homodimer. Part of the ribosomal stalk of the 50S ribosomal subunit. Forms a multimeric L10(L12)X complex, where L10 forms an elongated spine to which 2 to 4 L12 dimers bind in a sequential fashion. Binds GTP-bound translation factors.

Forms part of the ribosomal stalk which helps the ribosome interact with GTP-bound translation factors. Is thus essential for accurate translation. The chain is Large ribosomal subunit protein bL12 from Cyanothece sp. (strain PCC 7425 / ATCC 29141).